The primary structure comprises 227 residues: Cytochrome c oxidase subunit 2 (227 aa).

The Mitochondrial intermembrane portion of the chain corresponds to 1 to 14 (MAYPMQLGFQDATS). A helical transmembrane segment spans residues 15 to 45 (PIMEELLHFHDHTLMIVFLISSLVLYVISLM). At 46–59 (LTTKLTHTSTMDAQ) the chain is on the mitochondrial matrix side. Residues 60-87 (EVETIWTILPAIILILIALPSLRILYMM) traverse the membrane as a helical segment. At 88–227 (DEINNPSLTV…YFEKWSASML (140 aa)) the chain is on the mitochondrial intermembrane side. Cu cation is bound by residues H161, C196, E198, C200, H204, and M207. E198 serves as a coordination point for Mg(2+). Y218 carries the post-translational modification Phosphotyrosine.

The protein belongs to the cytochrome c oxidase subunit 2 family. Component of the cytochrome c oxidase (complex IV, CIV), a multisubunit enzyme composed of 14 subunits. The complex is composed of a catalytic core of 3 subunits MT-CO1, MT-CO2 and MT-CO3, encoded in the mitochondrial DNA, and 11 supernumerary subunits COX4I, COX5A, COX5B, COX6A, COX6B, COX6C, COX7A, COX7B, COX7C, COX8 and NDUFA4, which are encoded in the nuclear genome. The complex exists as a monomer or a dimer and forms supercomplexes (SCs) in the inner mitochondrial membrane with NADH-ubiquinone oxidoreductase (complex I, CI) and ubiquinol-cytochrome c oxidoreductase (cytochrome b-c1 complex, complex III, CIII), resulting in different assemblies (supercomplex SCI(1)III(2)IV(1) and megacomplex MCI(2)III(2)IV(2)). Found in a complex with TMEM177, COA6, COX18, COX20, SCO1 and SCO2. Interacts with TMEM177 in a COX20-dependent manner. Interacts with COX20. Interacts with COX16. Cu cation serves as cofactor.

Its subcellular location is the mitochondrion inner membrane. It carries out the reaction 4 Fe(II)-[cytochrome c] + O2 + 8 H(+)(in) = 4 Fe(III)-[cytochrome c] + 2 H2O + 4 H(+)(out). Its function is as follows. Component of the cytochrome c oxidase, the last enzyme in the mitochondrial electron transport chain which drives oxidative phosphorylation. The respiratory chain contains 3 multisubunit complexes succinate dehydrogenase (complex II, CII), ubiquinol-cytochrome c oxidoreductase (cytochrome b-c1 complex, complex III, CIII) and cytochrome c oxidase (complex IV, CIV), that cooperate to transfer electrons derived from NADH and succinate to molecular oxygen, creating an electrochemical gradient over the inner membrane that drives transmembrane transport and the ATP synthase. Cytochrome c oxidase is the component of the respiratory chain that catalyzes the reduction of oxygen to water. Electrons originating from reduced cytochrome c in the intermembrane space (IMS) are transferred via the dinuclear copper A center (CU(A)) of subunit 2 and heme A of subunit 1 to the active site in subunit 1, a binuclear center (BNC) formed by heme A3 and copper B (CU(B)). The BNC reduces molecular oxygen to 2 water molecules using 4 electrons from cytochrome c in the IMS and 4 protons from the mitochondrial matrix. The chain is Cytochrome c oxidase subunit 2 (MT-CO2) from Rusa unicolor (Sambar).